The primary structure comprises 391 residues: Na(+)/H(+) antiporter NhaA (391 aa).

11 helical membrane-spanning segments follow: residues 14-34, 59-79, 95-115, 124-144, 154-174, 177-197, 213-233, 261-281, 292-312, 331-351, and 363-383; these read AGGI…NSPL, LIHW…GLEV, SLPT…YLIF, VGWA…MALL, VFLL…IAMF, TDLS…LVGL, LILW…GVII, FVIL…GMSL, IALG…FVAV, VAVM…LAFI, and LGIL…LSKV.

Belongs to the NhaA Na(+)/H(+) (TC 2.A.33) antiporter family.

It is found in the cell inner membrane. The catalysed reaction is Na(+)(in) + 2 H(+)(out) = Na(+)(out) + 2 H(+)(in). In terms of biological role, na(+)/H(+) antiporter that extrudes sodium in exchange for external protons. The sequence is that of Na(+)/H(+) antiporter NhaA from Shewanella loihica (strain ATCC BAA-1088 / PV-4).